The following is a 115-amino-acid chain: NADH-ubiquinone oxidoreductase chain 3 (115 aa).

3 consecutive transmembrane segments (helical) span residues 4-24, 55-75, and 84-104; these read LLTM…AFWL, FFLV…LLPI, and INTM…GLAY.

It belongs to the complex I subunit 3 family. In terms of assembly, core subunit of respiratory chain NADH dehydrogenase (Complex I) which is composed of 45 different subunits. Interacts with TMEM186. Interacts with TMEM242.

The protein resides in the mitochondrion inner membrane. The catalysed reaction is a ubiquinone + NADH + 5 H(+)(in) = a ubiquinol + NAD(+) + 4 H(+)(out). Functionally, core subunit of the mitochondrial membrane respiratory chain NADH dehydrogenase (Complex I) which catalyzes electron transfer from NADH through the respiratory chain, using ubiquinone as an electron acceptor. Essential for the catalytic activity of complex I. This chain is NADH-ubiquinone oxidoreductase chain 3, found in Neotoma lepida (Desert woodrat).